The sequence spans 124 residues: Large ribosomal subunit protein bL12 (124 aa).

Belongs to the bacterial ribosomal protein bL12 family. Homodimer. Part of the ribosomal stalk of the 50S ribosomal subunit. Forms a multimeric L10(L12)X complex, where L10 forms an elongated spine to which 2 to 4 L12 dimers bind in a sequential fashion. Binds GTP-bound translation factors.

Its function is as follows. Forms part of the ribosomal stalk which helps the ribosome interact with GTP-bound translation factors. Is thus essential for accurate translation. The protein is Large ribosomal subunit protein bL12 of Bacteroides fragilis (strain ATCC 25285 / DSM 2151 / CCUG 4856 / JCM 11019 / LMG 10263 / NCTC 9343 / Onslow / VPI 2553 / EN-2).